The sequence spans 403 residues: CCA-adding enzyme (403 aa).

Positions 32 and 35 each coordinate ATP. CTP-binding residues include glycine 32 and arginine 35. Residues aspartate 45 and aspartate 47 each coordinate Mg(2+). 5 residues coordinate ATP: arginine 116, aspartate 159, arginine 162, arginine 165, and arginine 168. Residues arginine 116, aspartate 159, arginine 162, arginine 165, and arginine 168 each coordinate CTP.

This sequence belongs to the tRNA nucleotidyltransferase/poly(A) polymerase family. Bacterial CCA-adding enzyme type 3 subfamily. In terms of assembly, homodimer. Mg(2+) is required as a cofactor.

It catalyses the reaction a tRNA precursor + 2 CTP + ATP = a tRNA with a 3' CCA end + 3 diphosphate. The enzyme catalyses a tRNA with a 3' CCA end + 2 CTP + ATP = a tRNA with a 3' CCACCA end + 3 diphosphate. Functionally, catalyzes the addition and repair of the essential 3'-terminal CCA sequence in tRNAs without using a nucleic acid template. Adds these three nucleotides in the order of C, C, and A to the tRNA nucleotide-73, using CTP and ATP as substrates and producing inorganic pyrophosphate. tRNA 3'-terminal CCA addition is required both for tRNA processing and repair. Also involved in tRNA surveillance by mediating tandem CCA addition to generate a CCACCA at the 3' terminus of unstable tRNAs. While stable tRNAs receive only 3'-terminal CCA, unstable tRNAs are marked with CCACCA and rapidly degraded. In Streptococcus suis (strain 98HAH33), this protein is CCA-adding enzyme.